The sequence spans 794 residues: Zinc finger protein 148 (794 aa).

K6 is covalently cross-linked (Glycyl lysine isopeptide (Lys-Gly) (interchain with G-Cter in SUMO2)). S51 carries the phosphoserine modification. Residues K88, K115, and K132 each participate in a glycyl lysine isopeptide (Lys-Gly) (interchain with G-Cter in SUMO2) cross-link. Residues 171-193 (HVCEHCNAAFRTNYHLQRHVFIH) form a C2H2-type 1 zinc finger. T194 carries the phosphothreonine modification. 2 C2H2-type zinc fingers span residues 199–221 (FQCSQCDMRFIQKYLLQRHEKIH) and 227–249 (FRCDECGMRFIQKYHMERHKRTH). A Phosphoserine modification is found at S250. The segment at 255–278 (YQCEYCLQYFSRTDRVLKHKRMCH) adopts a C2H2-type 4 zinc-finger fold. Residue K291 forms a Glycyl lysine isopeptide (Lys-Gly) (interchain with G-Cter in SUMO2) linkage. Residues 298-336 (EEDSGFSTSPKDNSLPKKKRQKTEKKSSGMDKESVLDKS) are disordered. 2 positions are modified to phosphoserine: S301 and S306. Residue K308 forms a Glycyl lysine isopeptide (Lys-Gly) (interchain with G-Cter in SUMO2) linkage. A compositionally biased stretch (basic and acidic residues) spans 321 to 336 (EKKSSGMDKESVLDKS). Residue K356 forms a Glycyl lysine isopeptide (Lys-Gly) (interchain with G-Cter in SUMO1); alternate linkage. A Glycyl lysine isopeptide (Lys-Gly) (interchain with G-Cter in SUMO2); alternate cross-link involves residue K356. K402 participates in a covalent cross-link: Glycyl lysine isopeptide (Lys-Gly) (interchain with G-Cter in SUMO2). S412 is subject to Phosphoserine. Residues K421 and K424 each participate in a glycyl lysine isopeptide (Lys-Gly) (interchain with G-Cter in SUMO2) cross-link. Polar residues predominate over residues 574–588 (NSSDVPEVTQSENVG). The disordered stretch occupies residues 574-599 (NSSDVPEVTQSENVGSSSQASSSDKA). K607 is subject to N6-acetyllysine. S665 and S784 each carry phosphoserine.

It belongs to the krueppel C2H2-type zinc-finger protein family. As to quaternary structure, interacts with HNRNPDL. Interacts with the 5FMC complex; the interaction requires association with CHTOP. Interacts with CAVIN1. Post-translationally, sumoylated with SUMO2. Desumoylated by SENP3, resulting in the stimulation of transcription of its target genes. Strong expression detected in brain, lung, liver and kidney, with lower levels detected in spleen, skeletal muscle, testis and heart.

It is found in the nucleus. Its function is as follows. Involved in transcriptional regulation. Represses the transcription of a number of genes including gastrin, stromelysin and enolase. Binds to the G-rich box in the enhancer region of these genes. The protein is Zinc finger protein 148 (Znf148) of Mus musculus (Mouse).